Reading from the N-terminus, the 249-residue chain is Bis(5'-nucleosyl)-tetraphosphatase PrpE [asymmetrical] (249 aa).

This sequence belongs to the PrpE family. Ni(2+) serves as cofactor.

The enzyme catalyses P(1),P(4)-bis(5'-guanosyl) tetraphosphate + H2O = GMP + GTP + 2 H(+). Asymmetrically hydrolyzes Ap4p to yield AMP and ATP. The chain is Bis(5'-nucleosyl)-tetraphosphatase PrpE [asymmetrical] from Bacillus velezensis (strain DSM 23117 / BGSC 10A6 / LMG 26770 / FZB42) (Bacillus amyloliquefaciens subsp. plantarum).